A 124-amino-acid chain; its full sequence is Ribosome-binding factor A (124 aa).

Belongs to the RbfA family. Monomer. Binds 30S ribosomal subunits, but not 50S ribosomal subunits or 70S ribosomes.

Its subcellular location is the cytoplasm. Its function is as follows. One of several proteins that assist in the late maturation steps of the functional core of the 30S ribosomal subunit. Associates with free 30S ribosomal subunits (but not with 30S subunits that are part of 70S ribosomes or polysomes). Required for efficient processing of 16S rRNA. May interact with the 5'-terminal helix region of 16S rRNA. This Sorangium cellulosum (strain So ce56) (Polyangium cellulosum (strain So ce56)) protein is Ribosome-binding factor A.